Consider the following 178-residue polypeptide: MQDVQRTIEVSVGPIVGLDYTLLYDTLPETVSDNITLPDLKDPERVTEDTKKLILKGCVYIAYHHPLETDTLFIKVHKHIPEFCHSFLSHLLGGEDDDNALIDIGLFFNMLQPSLGGWITKNFLRHPNRMSKDQIKMLLDQIIKMAKAESSDTEEYEKVWKKMPTYFESIIQPLLHKT.

The protein belongs to the tenuiviruses NCP family.

Its subcellular location is the host cytoplasm. Induces the formation of large intracellular inclusion body, organized in amorphous and crystalline arrays. Presumably the main cause of the stripe disease observed in host. This is Major non-capsid protein from Rice stripe virus (isolate T) (RSV).